Reading from the N-terminus, the 410-residue chain is Argininosuccinate synthase (410 aa).

ATP-binding positions include 11-19 (AYSGGLDTS) and Ala37. Positions 88 and 93 each coordinate L-citrulline. ATP is bound at residue 116–124 (SHGCTGKGN). Positions 120, 124, and 125 each coordinate L-aspartate. Asn124 lines the L-citrulline pocket. Arg128, Ser181, Ser190, Glu269, and Tyr281 together coordinate L-citrulline.

Belongs to the argininosuccinate synthase family. Type 1 subfamily. In terms of assembly, homotetramer.

It is found in the cytoplasm. The enzyme catalyses L-citrulline + L-aspartate + ATP = 2-(N(omega)-L-arginino)succinate + AMP + diphosphate + H(+). It participates in amino-acid biosynthesis; L-arginine biosynthesis; L-arginine from L-ornithine and carbamoyl phosphate: step 2/3. This Schizosaccharomyces pombe (strain 972 / ATCC 24843) (Fission yeast) protein is Argininosuccinate synthase (arg12).